A 421-amino-acid polypeptide reads, in one-letter code: Odorant receptor 67b (421 aa).

Residues 1–48 (MQDQLDHELERIDKLPKLGLLWVEYSAYALGVNIAPRKRSSKYCRLTR) lie on the Cytoplasmic side of the membrane. Residues 49-69 (ILVLIVNLSIIYSLVAFIMEN) traverse the membrane as a helical segment. Residues 70-71 (YM) are Extracellular-facing. Residues 72-92 (ISFETYVEAVLLTFQLSVGVV) traverse the membrane as a helical segment. Residues 93-151 (KMFHFQNKVESCSQLVFSTETGEVLKSLGLFQLDLPRKKELLSSVSLILLNNWMIIDRQ) are Cytoplasmic-facing. A helical membrane pass occupies residues 152-172 (VMFFFKIVCMPVLYYCVRPYF). Over 173–217 (QYIFDCYIKDKDTCEMTLTYPAIVPYLQLGNYEFPSYVIRFFLLQ) the chain is Extracellular. The chain crosses the membrane as a helical span at residues 218-238 (SGPLWCFFAVFGFNSLFVVLT). The Cytoplasmic segment spans residues 239–289 (RYESGLIKVLRFLVQNSTSDILVPKDQRVKYLQCCVRLFARISSHHNQIEN). Residues 290-310 (LFKYIILVQCSVSSILICMLL) traverse the membrane as a helical segment. The Extracellular portion of the chain corresponds to 311-315 (YKIST). Residues 316–336 (VLEVGWVWMGMIMVYFVTIAL) form a helical membrane-spanning segment. Residues 337–384 (EITLYNVSAQKVESQSELLFHDWYNCSWYNESREFKFMIKMMLLFSRR) are Cytoplasmic-facing. A helical membrane pass occupies residues 385-405 (TFVLSVGGFTSLSHKFLVQVF). Residues 406-421 (RLSANFFLLLRNMNNK) are Extracellular-facing.

This sequence belongs to the insect chemoreceptor superfamily. Heteromeric odorant receptor channel (TC 1.A.69) family. Or63a subfamily. In terms of assembly, interacts with Orco. Complexes exist early in the endomembrane system in olfactory sensory neurons (OSNs), coupling these complexes to the conserved ciliary trafficking pathway.

The protein localises to the cell membrane. Odorant receptor which mediates acceptance or avoidance behavior, depending on its substrates. The odorant receptor repertoire encodes a large collection of odor stimuli that vary widely in identity, intensity, and duration. May form a complex with Orco to form odorant-sensing units, providing sensitive and prolonged odorant signaling and calcium permeability. Involved in the behavioral responses to ethyl acetate, pentyl acetate, methyl caproate, anisole, heptanal, 2-heptanone, r-carvone, nonanoic acid, and pyrazines. This Drosophila melanogaster (Fruit fly) protein is Odorant receptor 67b (Or67b).